The sequence spans 31 residues: Cytochrome b6-f complex subunit 6 (31 aa).

Residues 4-24 form a helical membrane-spanning segment; the sequence is ITSYFGFLLAVLTITSALFIG.

It belongs to the PetL family. The 4 large subunits of the cytochrome b6-f complex are cytochrome b6, subunit IV (17 kDa polypeptide, PetD), cytochrome f and the Rieske protein, while the 4 small subunits are PetG, PetL, PetM and PetN. The complex functions as a dimer.

Its subcellular location is the plastid. The protein resides in the chloroplast thylakoid membrane. Component of the cytochrome b6-f complex, which mediates electron transfer between photosystem II (PSII) and photosystem I (PSI), cyclic electron flow around PSI, and state transitions. PetL is important for photoautotrophic growth as well as for electron transfer efficiency and stability of the cytochrome b6-f complex. This is Cytochrome b6-f complex subunit 6 from Cucumis sativus (Cucumber).